The following is a 461-amino-acid chain: Phosphoglucosamine mutase (461 aa).

Ser-113 (phosphoserine intermediate) is an active-site residue. Ser-113, Asp-251, Asp-253, and Asp-255 together coordinate Mg(2+). The residue at position 113 (Ser-113) is a Phosphoserine.

The protein belongs to the phosphohexose mutase family. The cofactor is Mg(2+). Activated by phosphorylation.

It carries out the reaction alpha-D-glucosamine 1-phosphate = D-glucosamine 6-phosphate. Functionally, catalyzes the conversion of glucosamine-6-phosphate to glucosamine-1-phosphate. The sequence is that of Phosphoglucosamine mutase from Prochlorococcus marinus (strain SARG / CCMP1375 / SS120).